A 304-amino-acid polypeptide reads, in one-letter code: GTPase Era (304 aa).

An Era-type G domain is found at 9–176 (KSGFVSIIGR…LLEITKHLSE (168 aa)). The segment at 17-24 (GRPNVGKS) is G1. Residue 17-24 (GRPNVGKS) participates in GTP binding. Residues 43–47 (QTTRN) form a G2 region. The segment at 64-67 (DTPG) is G3. Residues 64–68 (DTPGI) and 126–129 (NKID) each bind GTP. The tract at residues 126–129 (NKID) is G4. The tract at residues 155 to 157 (VSA) is G5. The KH type-2 domain occupies 199-285 (IREKVLHLTR…FLELWVKVQK (87 aa)).

It belongs to the TRAFAC class TrmE-Era-EngA-EngB-Septin-like GTPase superfamily. Era GTPase family. In terms of assembly, monomer.

It is found in the cytoplasm. The protein resides in the cell membrane. Functionally, an essential GTPase that binds both GDP and GTP, with rapid nucleotide exchange. Plays a role in 16S rRNA processing and 30S ribosomal subunit biogenesis and possibly also in cell cycle regulation and energy metabolism. The protein is GTPase Era of Halalkalibacterium halodurans (strain ATCC BAA-125 / DSM 18197 / FERM 7344 / JCM 9153 / C-125) (Bacillus halodurans).